The sequence spans 427 residues: Enolase (427 aa).

Q163 lines the (2R)-2-phosphoglycerate pocket. The active-site Proton donor is E205. Mg(2+) contacts are provided by D242, E285, and D312. (2R)-2-phosphoglycerate contacts are provided by K337, R366, S367, and K388. K337 serves as the catalytic Proton acceptor.

Belongs to the enolase family. It depends on Mg(2+) as a cofactor.

The protein resides in the cytoplasm. Its subcellular location is the secreted. It is found in the cell surface. The enzyme catalyses (2R)-2-phosphoglycerate = phosphoenolpyruvate + H2O. The protein operates within carbohydrate degradation; glycolysis; pyruvate from D-glyceraldehyde 3-phosphate: step 4/5. Its function is as follows. Catalyzes the reversible conversion of 2-phosphoglycerate (2-PG) into phosphoenolpyruvate (PEP). It is essential for the degradation of carbohydrates via glycolysis. This is Enolase from Bradyrhizobium diazoefficiens (strain JCM 10833 / BCRC 13528 / IAM 13628 / NBRC 14792 / USDA 110).